Here is a 181-residue protein sequence, read N- to C-terminus: Transcription antitermination protein NusB (181 aa).

The tract at residues 1-36 (MTEDNNKAAGAKPRPARQVRTGLTSTGARKASAKSN) is disordered.

Belongs to the NusB family.

In terms of biological role, involved in transcription antitermination. Required for transcription of ribosomal RNA (rRNA) genes. Binds specifically to the boxA antiterminator sequence of the ribosomal RNA (rrn) operons. This is Transcription antitermination protein NusB from Variovorax paradoxus (strain S110).